The sequence spans 319 residues: Phospho-N-acetylmuramoyl-pentapeptide-transferase (319 aa).

The next 9 membrane-spanning stretches (helical) occupy residues L5–W25, T51–Y71, V79–L99, L119–Y139, V149–L169, L173–F193, N197–F217, I224–G246, and V299–G319.

It belongs to the glycosyltransferase 4 family. MraY subfamily. Requires Mg(2+) as cofactor.

The protein resides in the cell membrane. It catalyses the reaction UDP-N-acetyl-alpha-D-muramoyl-L-alanyl-gamma-D-glutamyl-L-lysyl-D-alanyl-D-alanine + di-trans,octa-cis-undecaprenyl phosphate = Mur2Ac(oyl-L-Ala-gamma-D-Glu-L-Lys-D-Ala-D-Ala)-di-trans,octa-cis-undecaprenyl diphosphate + UMP. Its pathway is cell wall biogenesis; peptidoglycan biosynthesis. Catalyzes the initial step of the lipid cycle reactions in the biosynthesis of the cell wall peptidoglycan: transfers peptidoglycan precursor phospho-MurNAc-pentapeptide from UDP-MurNAc-pentapeptide onto the lipid carrier undecaprenyl phosphate, yielding undecaprenyl-pyrophosphoryl-MurNAc-pentapeptide, known as lipid I. This is Phospho-N-acetylmuramoyl-pentapeptide-transferase from Lactobacillus delbrueckii subsp. bulgaricus (strain ATCC BAA-365 / Lb-18).